The following is a 381-amino-acid chain: Homoserine O-succinyltransferase (381 aa).

The 316-residue stretch at 45–360 (NAVLVCHALN…PHGHDAFLLD (316 aa)) folds into the AB hydrolase-1 domain. Ser-151 acts as the Nucleophile in catalysis. Arg-221 lines the substrate pocket. Active-site residues include Asp-321 and His-354. Asp-355 serves as a coordination point for substrate.

This sequence belongs to the AB hydrolase superfamily. MetX family. Homodimer.

Its subcellular location is the cytoplasm. It carries out the reaction L-homoserine + succinyl-CoA = O-succinyl-L-homoserine + CoA. Its pathway is amino-acid biosynthesis; L-methionine biosynthesis via de novo pathway; O-succinyl-L-homoserine from L-homoserine: step 1/1. Its function is as follows. Transfers a succinyl group from succinyl-CoA to L-homoserine, forming succinyl-L-homoserine. In Burkholderia thailandensis (strain ATCC 700388 / DSM 13276 / CCUG 48851 / CIP 106301 / E264), this protein is Homoserine O-succinyltransferase.